A 247-amino-acid polypeptide reads, in one-letter code: Adenosylcobinamide-GDP ribazoletransferase (247 aa).

6 helical membrane passes run 34 to 54 (IVMFPFIGLILGGISGLIFIL), 59 to 79 (CGIPLAALFCILALALLTGGF), 113 to 133 (GGLALIFVLLAKILVVSELAL), 138 to 158 (MLAALAVACAAGHGSAVLLMY), 171 to 191 (VFIGKVSGRQTCITLGLAVIV), and 194 to 214 (VLLPGMQGLATMVVTLAAIFI).

The protein belongs to the CobS family. Requires Mg(2+) as cofactor.

It is found in the cell inner membrane. The enzyme catalyses alpha-ribazole + adenosylcob(III)inamide-GDP = adenosylcob(III)alamin + GMP + H(+). It carries out the reaction alpha-ribazole 5'-phosphate + adenosylcob(III)inamide-GDP = adenosylcob(III)alamin 5'-phosphate + GMP + H(+). Its pathway is cofactor biosynthesis; adenosylcobalamin biosynthesis; adenosylcobalamin from cob(II)yrinate a,c-diamide: step 7/7. Functionally, joins adenosylcobinamide-GDP and alpha-ribazole to generate adenosylcobalamin (Ado-cobalamin). Also synthesizes adenosylcobalamin 5'-phosphate from adenosylcobinamide-GDP and alpha-ribazole 5'-phosphate. In Salmonella paratyphi A (strain ATCC 9150 / SARB42), this protein is Adenosylcobinamide-GDP ribazoletransferase.